A 215-amino-acid polypeptide reads, in one-letter code: Urease accessory protein UreG (215 aa).

A disordered region spans residues 1–21; that stretch reads MNAPAPSSARRTKKLPPLRVG. 24-31 provides a ligand contact to GTP; it reads GPVGSGKT.

This sequence belongs to the SIMIBI class G3E GTPase family. UreG subfamily. As to quaternary structure, homodimer. UreD, UreF and UreG form a complex that acts as a GTP-hydrolysis-dependent molecular chaperone, activating the urease apoprotein by helping to assemble the nickel containing metallocenter of UreC. The UreE protein probably delivers the nickel.

The protein localises to the cytoplasm. Facilitates the functional incorporation of the urease nickel metallocenter. This process requires GTP hydrolysis, probably effectuated by UreG. The chain is Urease accessory protein UreG from Burkholderia lata (strain ATCC 17760 / DSM 23089 / LMG 22485 / NCIMB 9086 / R18194 / 383).